A 365-amino-acid polypeptide reads, in one-letter code: Spore germination protein A2 (365 aa).

A run of 11 helical transmembrane segments spans residues 12-32 (TFQG…LTLP), 45-65 (WITL…NTLI), 85-105 (WIGS…ASFE), 122-142 (PIQV…VGGL), 148-168 (LFPF…GISF), 187-207 (IANS…MLFL), 223-243 (LGFL…VGAL), 250-270 (TLIW…IFIE), 275-295 (FLLV…GYFA), 303-323 (FGLS…YFSL), and 338-358 (LGYI…IVAL).

It belongs to the amino acid-polyamine-organocation (APC) superfamily. Spore germination protein (SGP) (TC 2.A.3.9) family.

The protein resides in the cell membrane. Its function is as follows. Involved in the germinative response to L-alanine. Could be an amino acid transporter. Forms a complex at the inner spore membrane which acts as a receptor for L-alanine, thus is involved in the stimulation of germination in response to alanine. Can stimulate germination in the absence of gerD and gerK gene products (fructose and glucose receptors, respectively), but the response is improved in their presence. The polypeptide is Spore germination protein A2 (gerAB) (Bacillus subtilis (strain 168)).